Reading from the N-terminus, the 383-residue chain is S-adenosylmethionine synthase (383 aa).

ATP is bound at residue His15. Asp17 is a Mg(2+) binding site. Position 43 (Glu43) interacts with K(+). L-methionine-binding residues include Glu56 and Gln99. A flexible loop region spans residues 99–109; that stretch reads QSPDINQGVDR. ATP is bound by residues 164-166, 230-231, Asp239, 245-246, Ala262, and Lys266; these read DAK, RF, and RK. Position 239 (Asp239) interacts with L-methionine. Lys270 is an L-methionine binding site.

Belongs to the AdoMet synthase family. As to quaternary structure, homotetramer; dimer of dimers. It depends on Mg(2+) as a cofactor. K(+) serves as cofactor.

The protein localises to the cytoplasm. The catalysed reaction is L-methionine + ATP + H2O = S-adenosyl-L-methionine + phosphate + diphosphate. The protein operates within amino-acid biosynthesis; S-adenosyl-L-methionine biosynthesis; S-adenosyl-L-methionine from L-methionine: step 1/1. Catalyzes the formation of S-adenosylmethionine (AdoMet) from methionine and ATP. The overall synthetic reaction is composed of two sequential steps, AdoMet formation and the subsequent tripolyphosphate hydrolysis which occurs prior to release of AdoMet from the enzyme. The chain is S-adenosylmethionine synthase from Shewanella sp. (strain ANA-3).